A 149-amino-acid polypeptide reads, in one-letter code: Calmodulin (149 aa).

Position 2 is an N-acetylalanine (Ala2). EF-hand domains lie at Asp8–Asn43, Pro44–Asp79, Asp81–Lys116, and Leu117–Lys149. Residues Asp21, Asp23, Asp25, Cys27, Glu32, Asp57, Asp59, Asn61, Thr63, Glu68, Asp94, Asp96, Asn98, and Glu105 each contribute to the Ca(2+) site. Lys116 is modified (N6,N6,N6-trimethyllysine). Residues Asp130, Asp132, Asp134, Gln136, and Glu141 each coordinate Ca(2+).

This sequence belongs to the calmodulin family.

In terms of biological role, calmodulin mediates the control of a large number of enzymes, ion channels and other proteins by Ca(2+). Among the enzymes to be stimulated by the calmodulin-Ca(2+) complex are a number of protein kinases and phosphatases. In Malus domestica (Apple), this protein is Calmodulin (CAM).